Here is a 254-residue protein sequence, read N- to C-terminus: MNSQFAGLTREACVALLASYPLSVGILAGQWIALHRYLQQLEALNQPLLHLDLMDGQFCPQFTVGPWAVGQLPQTFIKDVHLMVADQWTAAQACVKAGAHCITLQAEGDIHLHHTLSWLGQQTVPVIGGEMPVIRGISLCPATPLDVIIPILSDVEVIQLLAVNPGYGSKMRSSDLHERVAQLLCLLGDKREGKIIVIDGSLTQDQLPSLIAQGIDRVVSGSALFRDDRLVENTRSWRAMFKVAGDTTFLPSTA.

The helical transmembrane segment at 14–34 threads the bilayer; the sequence is VALLASYPLSVGILAGQWIAL. A divalent metal cation-binding residues include His-50, Asp-52, and His-81. Asp-52 serves as the catalytic Proton acceptor. Substrate contacts are provided by residues His-81, 166-169, 199-201, and 221-222; these read GYGS, DGS, and GS. A divalent metal cation is bound at residue Asp-199. Asp-199 serves as the catalytic Proton donor.

This sequence belongs to the ribulose-phosphate 3-epimerase family. The cofactor is a divalent metal cation.

Its subcellular location is the cell membrane. This chain is Putative epimerase LsrE (lsrE), found in Salmonella choleraesuis (strain SC-B67).